Here is a 471-residue protein sequence, read N- to C-terminus: Glutamate--tRNA ligase (471 aa).

Residues 9–19 carry the 'HIGH' region motif; the sequence is PSPTGYLHVGG. Zn(2+)-binding residues include C98, C100, C125, and H127. The 'KMSKS' region motif lies at 237-241; the sequence is KLSKR. K240 is a binding site for ATP.

The protein belongs to the class-I aminoacyl-tRNA synthetase family. Glutamate--tRNA ligase type 1 subfamily. As to quaternary structure, monomer. It depends on Zn(2+) as a cofactor.

The protein localises to the cytoplasm. The catalysed reaction is tRNA(Glu) + L-glutamate + ATP = L-glutamyl-tRNA(Glu) + AMP + diphosphate. Catalyzes the attachment of glutamate to tRNA(Glu) in a two-step reaction: glutamate is first activated by ATP to form Glu-AMP and then transferred to the acceptor end of tRNA(Glu). The sequence is that of Glutamate--tRNA ligase from Escherichia coli (strain SMS-3-5 / SECEC).